Here is a 531-residue protein sequence, read N- to C-terminus: UDP-glucuronosyltransferase 1A5 (531 aa).

The N-terminal stretch at Met-1–Gly-25 is a signal peptide. Asn-116, Asn-131, Asn-139, Asn-293, and Asn-431 each carry an N-linked (GlcNAc...) asparagine glycan. Residues Val-489–Tyr-505 traverse the membrane as a helical segment.

The protein belongs to the UDP-glycosyltransferase family. As to quaternary structure, homodimer. Homooligomer. Interacts with UGT1A1, UGT1A3, UGT1A4, UGT1A6, UGT1A7, UGT1A8, UGT1A9 and UGT1A10 to form heterodimers.

It localises to the endoplasmic reticulum membrane. The catalysed reaction is glucuronate acceptor + UDP-alpha-D-glucuronate = acceptor beta-D-glucuronoside + UDP + H(+). It carries out the reaction zolasartan + UDP-alpha-D-glucuronate = zolarsartan-1-N-beta-D-glucuronide + UDP. UDP-glucuronosyltransferase (UGT) that catalyzes phase II biotransformation reactions in which lipophilic substrates are conjugated with glucuronic acid to increase the metabolite's water solubility, thereby facilitating excretion into either the urine or bile. Essential for the elimination and detoxification of drugs, xenobiotics and endogenous compounds. Involved in the glucuronidation of the AGTR1 angiotensin receptor antagonist zolarsatan, a drug which can inhibit the effect of angiotensin II. This is UDP-glucuronosyltransferase 1A5 from Rattus norvegicus (Rat).